The chain runs to 363 residues: UDP-N-acetylglucosamine--N-acetylmuramyl-(pentapeptide) pyrophosphoryl-undecaprenol N-acetylglucosamine transferase (363 aa).

UDP-N-acetyl-alpha-D-glucosamine contacts are provided by residues 10 to 12 (TGG), Asn-124, Ser-195, Ile-250, and Gln-295.

Belongs to the glycosyltransferase 28 family. MurG subfamily.

Its subcellular location is the cell membrane. It carries out the reaction di-trans,octa-cis-undecaprenyl diphospho-N-acetyl-alpha-D-muramoyl-L-alanyl-D-glutamyl-meso-2,6-diaminopimeloyl-D-alanyl-D-alanine + UDP-N-acetyl-alpha-D-glucosamine = di-trans,octa-cis-undecaprenyl diphospho-[N-acetyl-alpha-D-glucosaminyl-(1-&gt;4)]-N-acetyl-alpha-D-muramoyl-L-alanyl-D-glutamyl-meso-2,6-diaminopimeloyl-D-alanyl-D-alanine + UDP + H(+). It functions in the pathway cell wall biogenesis; peptidoglycan biosynthesis. In terms of biological role, cell wall formation. Catalyzes the transfer of a GlcNAc subunit on undecaprenyl-pyrophosphoryl-MurNAc-pentapeptide (lipid intermediate I) to form undecaprenyl-pyrophosphoryl-MurNAc-(pentapeptide)GlcNAc (lipid intermediate II). The polypeptide is UDP-N-acetylglucosamine--N-acetylmuramyl-(pentapeptide) pyrophosphoryl-undecaprenol N-acetylglucosamine transferase (Halalkalibacterium halodurans (strain ATCC BAA-125 / DSM 18197 / FERM 7344 / JCM 9153 / C-125) (Bacillus halodurans)).